Here is a 732-residue protein sequence, read N- to C-terminus: Catalase-peroxidase (732 aa).

Residues 1–10 show a composition bias toward basic and acidic residues; that stretch reads MDAKTDDKAG. Residues 1–26 are disordered; the sequence is MDAKTDDKAGKCPVAHGPAPRGNRDW. Residues 95 to 217 constitute a cross-link (tryptophyl-tyrosyl-methioninium (Trp-Tyr) (with M-243)); the sequence is WHSAGTYRTT…LGAVQMGLIY (123 aa). His-96 serves as the catalytic Proton acceptor. Residues 217–243 constitute a cross-link (tryptophyl-tyrosyl-methioninium (Tyr-Met) (with W-95)); the sequence is YVNPEGPNGNPDPLGSAKDIRETFARM. A heme b-binding site is contributed by His-258.

This sequence belongs to the peroxidase family. Peroxidase/catalase subfamily. Homodimer or homotetramer. It depends on heme b as a cofactor. Formation of the three residue Trp-Tyr-Met cross-link is important for the catalase, but not the peroxidase activity of the enzyme.

The enzyme catalyses H2O2 + AH2 = A + 2 H2O. The catalysed reaction is 2 H2O2 = O2 + 2 H2O. Functionally, bifunctional enzyme with both catalase and broad-spectrum peroxidase activity. The chain is Catalase-peroxidase from Rhodopseudomonas palustris (strain BisB18).